The sequence spans 407 residues: Serine/threonine-protein kinase GRIK2 (407 aa).

The tract at residues 21 to 64 (SGSRNQQSPKPYDDDTHSCDSDVTSTARGEEEEDEEEVEQKSRS) is disordered. Residues 31-40 (PYDDDTHSCD) show a composition bias toward basic and acidic residues. The region spanning 107-370 (YVRVCKIGSG…LKNVSEHPWV (264 aa)) is the Protein kinase domain. ATP contacts are provided by residues 113-121 (IGSGSYGKV) and K136. Position 153 is a phosphothreonine; by autocatalysis (T153). The active-site Proton acceptor is D238. Phosphoserine; by KIN10 is present on S260.

It belongs to the protein kinase superfamily. Ser/Thr protein kinase family. Associates with the SNF1-related protein kinase (SnRK) complex. Interacts with AL1, a geminivirus (TGMV) protein essential for viral replication. Expressed in shoot apical meristem, leaf primordium and emerging petiole (at protein level).

It carries out the reaction L-seryl-[protein] + ATP = O-phospho-L-seryl-[protein] + ADP + H(+). It catalyses the reaction L-threonyl-[protein] + ATP = O-phospho-L-threonyl-[protein] + ADP + H(+). Activated when autophosphorylated at Thr-153 and inactivated when phosphorylated at Ser-260 by SnRK1.1/KIN10. Functionally, activates SnRK1.1/KIN10 and SnRK1.2/KIN11 by phosphorylation of their activation-loop 'Thr-198' and 'Thr-176', respectively. Required for the regulation by SnRK1 kinases of the transcription of a large set of genes, the modification the activity of metabolic enzymes, and the control of various nutrient-responsive cellular developmental processes. The polypeptide is Serine/threonine-protein kinase GRIK2 (GRIK2) (Arabidopsis thaliana (Mouse-ear cress)).